The primary structure comprises 351 residues: S-adenosylmethionine:tRNA ribosyltransferase-isomerase (351 aa).

This sequence belongs to the QueA family. In terms of assembly, monomer.

The protein localises to the cytoplasm. It catalyses the reaction 7-aminomethyl-7-carbaguanosine(34) in tRNA + S-adenosyl-L-methionine = epoxyqueuosine(34) in tRNA + adenine + L-methionine + 2 H(+). It functions in the pathway tRNA modification; tRNA-queuosine biosynthesis. Transfers and isomerizes the ribose moiety from AdoMet to the 7-aminomethyl group of 7-deazaguanine (preQ1-tRNA) to give epoxyqueuosine (oQ-tRNA). This Sphingopyxis alaskensis (strain DSM 13593 / LMG 18877 / RB2256) (Sphingomonas alaskensis) protein is S-adenosylmethionine:tRNA ribosyltransferase-isomerase.